The sequence spans 24 residues: Prokineticin 1-like protein (24 aa).

A disulfide bridge connects residues Cys-7 and Cys-19.

Expressed by the skin glands.

The protein resides in the secreted. Functionally, stimulates insulin secretion by BRIN-BD11 cells in vitro. In Pelophylax saharicus (Sahara frog), this protein is Prokineticin 1-like protein.